A 184-amino-acid chain; its full sequence is MPVDAWVREEIEIPEGVEVSVQGNTVKVKGPKGEVERELFWPGVKIFVEGGKVVIYKDFPRRKDVAIVRTFKAHINNMIKGVTEGFTYKLKVVYSHFPITVKVQGDEVIIENFLGEKAPRRAKILPGVTVKVKGQEIIVEGIDKEAVGQTAANIEQATRITKWDRRVFQDGIYIVEKAGKPITF.

The protein belongs to the universal ribosomal protein uL6 family. Part of the 50S ribosomal subunit.

In terms of biological role, this protein binds to the 23S rRNA, and is important in its secondary structure. It is located near the subunit interface in the base of the L7/L12 stalk, and near the tRNA binding site of the peptidyltransferase center. This is Large ribosomal subunit protein uL6 from Pyrococcus abyssi (strain GE5 / Orsay).